Reading from the N-terminus, the 361-residue chain is Allatostatin-A receptor (361 aa).

The Extracellular portion of the chain corresponds to 1–46 (MESTEDEFYTICLNLTAEDPSFGNCNYTTDFENGELLEKVVSRVVP). N-linked (GlcNAc...) asparagine glycosylation is found at N14 and N26. The chain crosses the membrane as a helical span at residues 47 to 67 (IFFGFIGIVGLVGNALVVLVV). The Cytoplasmic segment spans residues 68 to 78 (AANPGMRSTTN). A helical membrane pass occupies residues 79-99 (LLIINLAVADLLFVIFCVPFT). At 100–116 (ATDYVMPRWPFGDWWCK) the chain is on the extracellular side. The cysteines at positions 115 and 196 are disulfide-linked. The chain crosses the membrane as a helical span at residues 117–137 (VVQYFIVVTAHASVYTLVLMS). Topologically, residues 138–158 (LDRFMAVVHPIASMSIRTEKN) are cytoplasmic. The chain crosses the membrane as a helical span at residues 159-179 (ALLAIACIWVVILTTAIPVGI). The Extracellular segment spans residues 180–212 (CHGEREYSYFNRNHSSCVFLEERGYSKLGFQMS). N192 is a glycosylation site (N-linked (GlcNAc...) asparagine). A helical membrane pass occupies residues 213–233 (FFLSSYVIPLALISVLYMCML). At 234 to 259 (TRLWKSAPGGRVSAESRRGRKKVTRM) the chain is on the cytoplasmic side. Residues 260 to 280 (VVVVVVVFAVCWCPIQIILLV) traverse the membrane as a helical segment. The Extracellular segment spans residues 281-296 (KALNKYHITYFTVTAQ). Residues 297–317 (IVSHVLAYMNSCVNPVLYAFL) form a helical membrane-spanning segment. Residues 318 to 361 (SENFRVAFRKVMYCPPPYNDGFSGRPQATKTTRTGNGNSCHDIV) lie on the Cytoplasmic side of the membrane. Positions 341-361 (GRPQATKTTRTGNGNSCHDIV) are disordered. The span at 343–361 (PQATKTTRTGNGNSCHDIV) shows a compositional bias: polar residues.

The protein belongs to the G-protein coupled receptor 1 family. In terms of tissue distribution, expressed in the midgut and, to a lesser extent, in the fore- and hindgut of fifth instar larvae. Also highly expressed in the brain of fourth and fifth instar larvae.

Its subcellular location is the cell membrane. Acts as a receptor for A-type allatostatin neuropeptide hormones. This Bombyx mori (Silk moth) protein is Allatostatin-A receptor.